The following is a 301-amino-acid chain: Outer membrane porin G (301 aa).

A signal peptide spans 1-21 (MKKLLPCTALVMCAGMACAQA). A run of 16 beta stranded transmembrane segments spans residues 27–35 (WHFNIGAMY), 47–57 (MDGLAEPSVYF), 64–72 (WRIALAYYQ), 89–98 (RPELEVHYQF), 104–112 (FSFGLTGGF), 129–136 (NMQRWKIA), 149–158 (FNGWLSMYKF), 172–182 (VETETGLQYTF), 186–195 (VALRVNYYLE), 201–209 (DDSRNNGEF), 213–222 (EIRAYLPLTL), 230–238 (YTRIGLDRW), 240–248 (NWDWQDDIE), 254–265 (FNRVGLFYGYDF), 269–279 (LSVSLEYAFEW), and 289–300 (KFHYAGVGVNYS).

In terms of assembly, monomer.

Its subcellular location is the cell outer membrane. Functionally, forms channels functionally larger than those of classical porins. May act as a regulator of the RCS-phosphorelay signal transduction pathway. In Escherichia coli (strain K12), this protein is Outer membrane porin G (ompG).